A 417-amino-acid chain; its full sequence is Putative F-box protein At4g21240 (417 aa).

Acidic residues predominate over residues 1 to 12 (MDRREEEEEETG). The tract at residues 1–25 (MDRREEEEEETGYGEKGTRNQSKED) is disordered. A compositionally biased stretch (basic and acidic residues) spans 16–25 (KGTRNQSKED). The region spanning 30–76 (GKIFELIPLDMIPDILLRLPAKSAVRFRIVSKLWLSITTRPYFIRSF) is the F-box domain.

The chain is Putative F-box protein At4g21240 from Arabidopsis thaliana (Mouse-ear cress).